The sequence spans 370 residues: 3-dehydroquinate synthase (370 aa).

Residues 112-116 (GVVGD), 136-137 (TS), Lys149, Lys158, and 176-179 (TLRT) contribute to the NAD(+) site. Zn(2+)-binding residues include Glu191, His254, and His276.

It belongs to the sugar phosphate cyclases superfamily. Dehydroquinate synthase family. It depends on Co(2+) as a cofactor. Zn(2+) serves as cofactor. Requires NAD(+) as cofactor.

Its subcellular location is the cytoplasm. The enzyme catalyses 7-phospho-2-dehydro-3-deoxy-D-arabino-heptonate = 3-dehydroquinate + phosphate. It participates in metabolic intermediate biosynthesis; chorismate biosynthesis; chorismate from D-erythrose 4-phosphate and phosphoenolpyruvate: step 2/7. Its function is as follows. Catalyzes the conversion of 3-deoxy-D-arabino-heptulosonate 7-phosphate (DAHP) to dehydroquinate (DHQ). The polypeptide is 3-dehydroquinate synthase (Xanthomonas oryzae pv. oryzae (strain MAFF 311018)).